The following is a 404-amino-acid chain: 1-deoxy-D-xylulose 5-phosphate reductoisomerase (404 aa).

T5, G6, S7, I8, G31, R32, N33, and N121 together coordinate NADPH. K122 is a binding site for 1-deoxy-D-xylulose 5-phosphate. E123 contacts NADPH. D147 contributes to the Mn(2+) binding site. S148, E149, S185, and H208 together coordinate 1-deoxy-D-xylulose 5-phosphate. Position 149 (E149) interacts with Mn(2+). G214 serves as a coordination point for NADPH. Positions 221, 226, 227, and 230 each coordinate 1-deoxy-D-xylulose 5-phosphate. E230 lines the Mn(2+) pocket.

It belongs to the DXR family. Mg(2+) is required as a cofactor. Mn(2+) serves as cofactor.

It catalyses the reaction 2-C-methyl-D-erythritol 4-phosphate + NADP(+) = 1-deoxy-D-xylulose 5-phosphate + NADPH + H(+). It participates in isoprenoid biosynthesis; isopentenyl diphosphate biosynthesis via DXP pathway; isopentenyl diphosphate from 1-deoxy-D-xylulose 5-phosphate: step 1/6. In terms of biological role, catalyzes the NADPH-dependent rearrangement and reduction of 1-deoxy-D-xylulose-5-phosphate (DXP) to 2-C-methyl-D-erythritol 4-phosphate (MEP). The sequence is that of 1-deoxy-D-xylulose 5-phosphate reductoisomerase from Prochlorococcus marinus subsp. pastoris (strain CCMP1986 / NIES-2087 / MED4).